Consider the following 563-residue polypeptide: Autophagy-related protein 18 (563 aa).

WD repeat units follow at residues 36 to 74, 247 to 287, and 292 to 331; these read KTDD…GKCY, AHKS…KLFQ, and TYST…ALEN. Positions 288–292 match the L/FRRG motif motif; sequence FRRGT. Positions 329-430 are disordered; the sequence is LENKHKKKKA…SSQAAKNEPL (102 aa). A compositionally biased stretch (acidic residues) spans 366–393; that stretch reads TQDDDEFADDGDDSDEAVEGDDNDDESL. The span at 404–417 shows a compositional bias: low complexity; it reads SQGSSNSFASFNSG.

It belongs to the WD repeat PROPPIN family. As to quaternary structure, component of the PI(3,5)P2 regulatory complex.

Its subcellular location is the preautophagosomal structure membrane. It is found in the vacuole membrane. It localises to the endosome membrane. Functionally, the PI(3,5)P2 regulatory complex regulates both the synthesis and turnover of phosphatidylinositol 3,5-bisphosphate (PtdIns(3,5)P2). Necessary for proper vacuole morphology. Plays an important role in osmotically-induced vacuole fragmentation. Required for cytoplasm to vacuole transport (Cvt) vesicle formation, pexophagy and starvation-induced autophagy. Involved in correct ATG9 trafficking to the pre-autophagosomal structure. Might also be involved in premeiotic DNA replication. This Scheffersomyces stipitis (strain ATCC 58785 / CBS 6054 / NBRC 10063 / NRRL Y-11545) (Yeast) protein is Autophagy-related protein 18 (ATG18).